Consider the following 60-residue polypeptide: MFARLIRYFQEARAELARVTWPTREQVVEGTQAILLFTLAFMVILGLYDTVFRFLIGLLR.

Residues 1-31 (MFARLIRYFQEARAELARVTWPTREQVVEGT) lie on the Cytoplasmic side of the membrane. Residues 32–52 (QAILLFTLAFMVILGLYDTVF) form a helical membrane-spanning segment. Residues 53–60 (RFLIGLLR) lie on the Extracellular side of the membrane.

This sequence belongs to the SecE/SEC61-gamma family. Component of the Sec protein translocase complex. Heterotrimer consisting of SecY, SecE and SecG subunits. The heterotrimers can form oligomers, although 1 heterotrimer is thought to be able to translocate proteins. Interacts with SecDF, and other proteins may be involved. The channel interacts with SecA via subunit SecY.

The protein localises to the cell inner membrane. In terms of biological role, essential subunit of the protein translocation channel SecYEG. Clamps together the 2 halves of SecY. May contact the channel plug during translocation. This Thermus thermophilus (strain ATCC 27634 / DSM 579 / HB8) protein is Protein translocase subunit SecE.